The primary structure comprises 224 residues: Transcriptional regulatory protein CiaR (224 aa).

The Response regulatory domain maps to 3 to 116 (KILLVEDDLG…ELKMRIQALL (114 aa)). Asp-51 bears the 4-aspartylphosphate mark. Positions 124 to 222 (ENTLTYGNIV…LRSVGYLLKD (99 aa)) form a DNA-binding region, ompR/PhoB-type.

In terms of processing, phosphorylated by CiaH.

It localises to the cytoplasm. Its function is as follows. Member of the two-component regulatory system CiaH/CiaR. Involved in early steps of competence regulation and in penicillin susceptibility. This Streptococcus pneumoniae (strain ATCC BAA-255 / R6) protein is Transcriptional regulatory protein CiaR (ciaR).